A 427-amino-acid chain; its full sequence is MSEFWLISAPGDKENLQALERMNNVTSKSNLSHNTKFAIPDFKVGTLDSLVGLSDELGKLDTFAESLIKRMAQSVVEVMEDSKGKAHETLLANGVDLTSFVTHFEWDMAKYPAKQPLVSVVDTLAKQLAQIETDLKSRTAAYSVLKANLENLEKRSTGNLFTRTLSDIVSKEDFVLDSEYLITLLVIVPKSSFAQWQKTYESLSDMVVPRSTKLIAEDNEGGLFTVTLFRKVIEDFKVKAKENKFIVREFYYDEKEIKREREEMTRLLSDKKQQYPTSCVALKKGSATYRDHKVKVAPLGNPARPAAGQTDRDRESEGEGEGPLLRWLKVNFSEAFIAWIHIKALRVFVESVLRYGLPVNFQAVLLQPHKKSATKRLREVLNSVFRHLDEVAAASILDASVEIPGLQLSNQDYFPYVYFHIDLSLLD.

The disordered stretch occupies residues 298–320; the sequence is PLGNPARPAAGQTDRDRESEGEG.

It belongs to the V-ATPase C subunit family. In terms of assembly, V-ATPase is a heteromultimeric enzyme made up of two complexes: the ATP-hydrolytic V1 complex and the proton translocation V0 complex. The V1 complex consists of three catalytic AB heterodimers that form a heterohexamer, three peripheral stalks each consisting of EG heterodimers, one central rotor including subunits D and F, and the regulatory subunits C and H. The proton translocation complex V0 consists of the proton transport subunit a, a ring of proteolipid subunits c9c'', rotary subunit d, subunits e and f, and the accessory subunits ATP6AP1/Ac45 and ATP6AP2/PRR. As to expression, predominantly expressed in the lung and kidney. Isoform 1 is lung-specific while isoform 3 is a kidney-specific isoform. Isoform 1 is localized in the lamellar bodies of type II alveolar cells. Isoform 2 is strongly expressed in the cortical and medulla collecting ducts and is found in the plasma membranes of renal alpha and beta intercalated cells.

In terms of biological role, subunit of the V1 complex of vacuolar(H+)-ATPase (V-ATPase), a multisubunit enzyme composed of a peripheral complex (V1) that hydrolyzes ATP and a membrane integral complex (V0) that translocates protons. V-ATPase is responsible for acidifying and maintaining the pH of intracellular compartments and in some cell types, is targeted to the plasma membrane, where it is responsible for acidifying the extracellular environment. Subunit C is necessary for the assembly of the catalytic sector of the enzyme and is likely to have a specific function in its catalytic activity. This Mus musculus (Mouse) protein is V-type proton ATPase subunit C 2 (Atp6v1c2).